The chain runs to 95 residues: L-amino-acid oxidase (95 aa).

This sequence belongs to the flavin monoamine oxidase family. FIG1 subfamily. As to quaternary structure, homodimer; non-covalently linked. The cofactor is FAD. Post-translationally, N-glycosylated. Expressed by the venom gland.

It localises to the secreted. It catalyses the reaction an L-alpha-amino acid + O2 + H2O = a 2-oxocarboxylate + H2O2 + NH4(+). The catalysed reaction is L-leucine + O2 + H2O = 4-methyl-2-oxopentanoate + H2O2 + NH4(+). It carries out the reaction L-phenylalanine + O2 + H2O = 3-phenylpyruvate + H2O2 + NH4(+). The enzyme catalyses L-tryptophan + O2 + H2O = indole-3-pyruvate + H2O2 + NH4(+). It catalyses the reaction L-methionine + O2 + H2O = 4-methylsulfanyl-2-oxobutanoate + H2O2 + NH4(+). The catalysed reaction is L-arginine + O2 + H2O = 5-guanidino-2-oxopentanoate + H2O2 + NH4(+). Catalyzes an oxidative deamination of predominantly hydrophobic and aromatic L-amino acids, thus producing hydrogen peroxide that may contribute to the diverse toxic effects of this enzyme. Is highly active on L-Met, L-Leu, L-Phe, L-Trp, and L-Arg, and no weakly or no active on L-His, L-Tyr, L-Ile, L-Gln, and L-Lys. Exhibits diverse biological activities, such as antibacterial activity against both Gram-positive (B.subtilis) and Gram-negative (E.coli) bacteria, and inhibition of ADP- or collagen-induced platelet aggregation. Effects of snake L-amino oxidases on platelets are controversial, since they either induce aggregation or inhibit agonist-induced aggregation. These different effects are probably due to different experimental conditions. This protein may also induce hemorrhage, hemolysis, edema, apoptosis, and have antiparasitic activities. In Naja oxiana (Central Asian cobra), this protein is L-amino-acid oxidase.